Consider the following 272-residue polypeptide: Dermonecrotic toxin LvSicTox-alphaIC1bi (272 aa).

The active site involves His5. Glu25 and Asp27 together coordinate Mg(2+). His41 serves as the catalytic Nucleophile. 2 cysteine pairs are disulfide-bonded: Cys45–Cys51 and Cys47–Cys189. Residue Asp84 participates in Mg(2+) binding.

This sequence belongs to the arthropod phospholipase D family. Class II subfamily. Mg(2+) is required as a cofactor. As to expression, expressed by the venom gland.

Its subcellular location is the secreted. It carries out the reaction an N-(acyl)-sphingosylphosphocholine = an N-(acyl)-sphingosyl-1,3-cyclic phosphate + choline. The catalysed reaction is an N-(acyl)-sphingosylphosphoethanolamine = an N-(acyl)-sphingosyl-1,3-cyclic phosphate + ethanolamine. It catalyses the reaction a 1-acyl-sn-glycero-3-phosphocholine = a 1-acyl-sn-glycero-2,3-cyclic phosphate + choline. The enzyme catalyses a 1-acyl-sn-glycero-3-phosphoethanolamine = a 1-acyl-sn-glycero-2,3-cyclic phosphate + ethanolamine. Functionally, dermonecrotic toxins cleave the phosphodiester linkage between the phosphate and headgroup of certain phospholipids (sphingolipid and lysolipid substrates), forming an alcohol (often choline) and a cyclic phosphate. This toxin acts on sphingomyelin (SM). It may also act on ceramide phosphoethanolamine (CPE), lysophosphatidylcholine (LPC) and lysophosphatidylethanolamine (LPE), but not on lysophosphatidylserine (LPS), and lysophosphatidylglycerol (LPG). It acts by transphosphatidylation, releasing exclusively cyclic phosphate products as second products. Induces dermonecrosis, hemolysis, increased vascular permeability, edema, inflammatory response, and platelet aggregation. This is Dermonecrotic toxin LvSicTox-alphaIC1bi from Loxosceles variegata (Recluse spider).